The following is a 196-amino-acid chain: ATP-dependent Clp protease proteolytic subunit (196 aa).

The active-site Nucleophile is the Ser101. His126 is an active-site residue.

It belongs to the peptidase S14 family. Component of the chloroplastic Clp protease core complex.

The protein localises to the plastid. Its subcellular location is the chloroplast stroma. It carries out the reaction Hydrolysis of proteins to small peptides in the presence of ATP and magnesium. alpha-casein is the usual test substrate. In the absence of ATP, only oligopeptides shorter than five residues are hydrolyzed (such as succinyl-Leu-Tyr-|-NHMec, and Leu-Tyr-Leu-|-Tyr-Trp, in which cleavage of the -Tyr-|-Leu- and -Tyr-|-Trp bonds also occurs).. Functionally, cleaves peptides in various proteins in a process that requires ATP hydrolysis. Has a chymotrypsin-like activity. Plays a major role in the degradation of misfolded proteins. This is ATP-dependent Clp protease proteolytic subunit from Lobularia maritima (Sweet alyssum).